The sequence spans 588 residues: Proline--tRNA ligase (588 aa).

It belongs to the class-II aminoacyl-tRNA synthetase family. ProS type 1 subfamily. Homodimer.

Its subcellular location is the cytoplasm. The catalysed reaction is tRNA(Pro) + L-proline + ATP = L-prolyl-tRNA(Pro) + AMP + diphosphate. Catalyzes the attachment of proline to tRNA(Pro) in a two-step reaction: proline is first activated by ATP to form Pro-AMP and then transferred to the acceptor end of tRNA(Pro). As ProRS can inadvertently accommodate and process non-cognate amino acids such as alanine and cysteine, to avoid such errors it has two additional distinct editing activities against alanine. One activity is designated as 'pretransfer' editing and involves the tRNA(Pro)-independent hydrolysis of activated Ala-AMP. The other activity is designated 'posttransfer' editing and involves deacylation of mischarged Ala-tRNA(Pro). The misacylated Cys-tRNA(Pro) is not edited by ProRS. The chain is Proline--tRNA ligase from Helicobacter hepaticus (strain ATCC 51449 / 3B1).